A 290-amino-acid polypeptide reads, in one-letter code: Nucleoid occlusion protein (290 aa).

A DNA-binding region (H-T-H motif) is located at residues 153-172 (EALAQRLGKGQSTIANKLRL).

The protein belongs to the ParB family.

The protein resides in the cytoplasm. It localises to the nucleoid. Effects nucleoid occlusion by binding relatively nonspecifically to DNA and preventing the assembly of the division machinery in the vicinity of the nucleoid, especially under conditions that disturb the cell cycle. It helps to coordinate cell division and chromosome segregation by preventing the formation of the Z ring through the nucleoid, which would cause chromosome breakage. This chain is Nucleoid occlusion protein, found in Bacillus anthracis (strain A0248).